Reading from the N-terminus, the 488-residue chain is uncharacterized protein (488 aa).

It is found in the cytoplasm. The protein localises to the nucleus. This is an uncharacterized protein from Schizosaccharomyces pombe (strain 972 / ATCC 24843) (Fission yeast).